The primary structure comprises 448 residues: Exodeoxyribonuclease 7 large subunit (448 aa).

Belongs to the XseA family. Heterooligomer composed of large and small subunits.

The protein localises to the cytoplasm. The catalysed reaction is Exonucleolytic cleavage in either 5'- to 3'- or 3'- to 5'-direction to yield nucleoside 5'-phosphates.. In terms of biological role, bidirectionally degrades single-stranded DNA into large acid-insoluble oligonucleotides, which are then degraded further into small acid-soluble oligonucleotides. The protein is Exodeoxyribonuclease 7 large subunit of Shewanella sp. (strain ANA-3).